We begin with the raw amino-acid sequence, 102 residues long: Large ribosomal subunit protein uL24 (102 aa).

It belongs to the universal ribosomal protein uL24 family. In terms of assembly, part of the 50S ribosomal subunit.

Functionally, one of two assembly initiator proteins, it binds directly to the 5'-end of the 23S rRNA, where it nucleates assembly of the 50S subunit. In terms of biological role, one of the proteins that surrounds the polypeptide exit tunnel on the outside of the subunit. The sequence is that of Large ribosomal subunit protein uL24 from Ralstonia pickettii (strain 12J).